Here is a 92-residue protein sequence, read N- to C-terminus: Protein S100-B (92 aa).

N-acetylserine is present on Ser-2. 2 consecutive EF-hand domains span residues 13 to 48 and 49 to 84; these read DVFH…LEEI and KEQE…VTTA. Zn(2+) is bound at residue His-16. The Ca(2+) site is built by Ser-19 and Glu-22. His-26 provides a ligand contact to Zn(2+). Ca(2+) contacts are provided by Lys-27, Glu-32, Asp-62, Asp-64, Asp-66, Glu-68, and Glu-73. Residues His-86 and His-91 each contribute to the Zn(2+) site.

The protein belongs to the S-100 family. In terms of assembly, dimer of either two alpha chains, or two beta chains, or one alpha and one beta chain. The S100B dimer binds two molecules of STK38. Interacts with CACYBP in a calcium-dependent manner. Interacts with ATAD3A; this interaction probably occurs in the cytosol prior to ATAD3A mitochondrial targeting. Interacts with S100A6. The S100B dimer interacts with two molecules of CAPZA1. Interacts with AGER. Interacts with PPP5C (via TPR repeats); the interaction is calcium-dependent and modulates PPP5C activity. Interacts with TPPP; this interaction inhibits TPPP dimerization. Interacts with isoform CLSTN3beta of CLSTN3; interaction promotes secretion. In terms of tissue distribution, although predominant among the water-soluble brain proteins, S100 is also found in a variety of other tissues.

The protein resides in the cytoplasm. It localises to the nucleus. It is found in the secreted. Its function is as follows. Small zinc- and- and calcium-binding protein that is highly expressed in astrocytes and constitutes one of the most abundant soluble proteins in brain. Weakly binds calcium but binds zinc very tightly-distinct binding sites with different affinities exist for both ions on each monomer. Physiological concentrations of potassium ion antagonize the binding of both divalent cations, especially affecting high-affinity calcium-binding sites. Acts as a neurotrophic factor that promotes astrocytosis and axonal proliferation. Involved in innervation of thermogenic adipose tissue by acting as an adipocyte-derived neurotrophic factor that promotes sympathetic innervation of adipose tissue. Binds to and initiates the activation of STK38 by releasing autoinhibitory intramolecular interactions within the kinase. Interaction with AGER after myocardial infarction may play a role in myocyte apoptosis by activating ERK1/2 and p53/TP53 signaling. Could assist ATAD3A cytoplasmic processing, preventing aggregation and favoring mitochondrial localization. May mediate calcium-dependent regulation on many physiological processes by interacting with other proteins, such as TPR-containing proteins, and modulating their activity. The protein is Protein S100-B of Rattus norvegicus (Rat).